We begin with the raw amino-acid sequence, 300 residues long: Ribosomal protein L11 methyltransferase (300 aa).

S-adenosyl-L-methionine-binding residues include threonine 152, glycine 173, aspartate 195, and asparagine 234.

It belongs to the methyltransferase superfamily. PrmA family.

Its subcellular location is the cytoplasm. The catalysed reaction is L-lysyl-[protein] + 3 S-adenosyl-L-methionine = N(6),N(6),N(6)-trimethyl-L-lysyl-[protein] + 3 S-adenosyl-L-homocysteine + 3 H(+). Its function is as follows. Methylates ribosomal protein L11. The sequence is that of Ribosomal protein L11 methyltransferase from Paraburkholderia phytofirmans (strain DSM 17436 / LMG 22146 / PsJN) (Burkholderia phytofirmans).